Consider the following 262-residue polypeptide: Small ribosomal subunit protein eS1y (262 aa).

A compositionally biased stretch (basic residues) spans 1–18 (MAVGKNKRISKGRKGGKK). Positions 1–21 (MAVGKNKRISKGRKGGKKKAV) are disordered.

It belongs to the eukaryotic ribosomal protein eS1 family. Component of the small ribosomal subunit. Mature ribosomes consist of a small (40S) and a large (60S) subunit. The 40S subunit contains about 33 different proteins and 1 molecule of RNA (18S). The 60S subunit contains about 49 different proteins and 3 molecules of RNA (25S, 5.8S and 5S).

The protein localises to the cytoplasm. The polypeptide is Small ribosomal subunit protein eS1y (Arabidopsis thaliana (Mouse-ear cress)).